The primary structure comprises 555 residues: MSTVDDILEHIGEFHLFQKQTFFLLALLSGAFTPIYVGIVFLGFTPDHHCWSPGAAKLSQRCGWSQAEELNYTVPGLGPSDEASFLSQCMRYEVDWNQSTLDCVDPLSSLAADRNQLPLGPCEHGWVYNTPGSSIVTEFNLVCAHSWMLDLFQSVVNVGFFIGAMMIGYLADRFGRKFCLLVTILINAISGALMAISPNYAWMLVFRFLQGLVSKAGWLIGYILITEFVGLGYRRMVGICYQIAFTVGLLILAGVAYVIPNWRWLQFAVTLPNFCFLLYFWCIPESPRWLISQNKIVKAMKIIKHIAKKNGKSVPVSLQNLTPDEDAGKKLNPSFLDLVRTPQIRKHTLILMYNWFTSSVLYQGLIMHMGLAGDNIYLDFFYSALVEFPAAFIIILTIDRVGRRYPWAVSNMVAGAACLASVFIPDDLQWLKITIACLGRMGITMAYEMVCLVNAELYPTYIRNLGVLVCSSMCDIGGIITPFLVYRLTDIWMEFPLVVFAVVGLVAGALVLLLPETKGKALPETIEDAENMQRPRKKKEKRIYLQVKQADRPLS.

The Cytoplasmic segment spans residues 1–21 (MSTVDDILEHIGEFHLFQKQT). The helical transmembrane segment at 22 to 42 (FFLLALLSGAFTPIYVGIVFL) threads the bilayer. Topologically, residues 43–150 (GFTPDHHCWS…LVCAHSWMLD (108 aa)) are extracellular. A glycan (N-linked (GlcNAc...) asparagine) is linked at Asn-71. Residues 151 to 171 (LFQSVVNVGFFIGAMMIGYLA) traverse the membrane as a helical segment. Topologically, residues 172–177 (DRFGRK) are cytoplasmic. A helical membrane pass occupies residues 178–198 (FCLLVTILINAISGALMAISP). The Extracellular portion of the chain corresponds to 199–210 (NYAWMLVFRFLQ). A helical membrane pass occupies residues 211-231 (GLVSKAGWLIGYILITEFVGL). At 232 to 238 (GYRRMVG) the chain is on the cytoplasmic side. A helical transmembrane segment spans residues 239–259 (ICYQIAFTVGLLILAGVAYVI). Residues 260–263 (PNWR) lie on the Extracellular side of the membrane. A helical transmembrane segment spans residues 264–284 (WLQFAVTLPNFCFLLYFWCIP). Positions 284 to 288 (PESPR) match the Proline-rich sequence motif. Topologically, residues 285-348 (ESPRWLISQN…VRTPQIRKHT (64 aa)) are cytoplasmic. Residues 349–369 (LILMYNWFTSSVLYQGLIMHM) form a helical membrane-spanning segment. The Extracellular portion of the chain corresponds to 370–375 (GLAGDN). A helical transmembrane segment spans residues 376–396 (IYLDFFYSALVEFPAAFIIIL). At 397–404 (TIDRVGRR) the chain is on the cytoplasmic side. The helical transmembrane segment at 405–425 (YPWAVSNMVAGAACLASVFIP) threads the bilayer. Residues 426–432 (DDLQWLK) are Extracellular-facing. Residues 433-453 (ITIACLGRMGITMAYEMVCLV) form a helical membrane-spanning segment. Residues 454 to 464 (NAELYPTYIRN) lie on the Cytoplasmic side of the membrane. Residues 465–485 (LGVLVCSSMCDIGGIITPFLV) form a helical membrane-spanning segment. Topologically, residues 486–494 (YRLTDIWME) are extracellular. Residues 495 to 515 (FPLVVFAVVGLVAGALVLLLP) traverse the membrane as a helical segment. Residues 516–555 (ETKGKALPETIEDAENMQRPRKKKEKRIYLQVKQADRPLS) are Cytoplasmic-facing.

It belongs to the major facilitator (TC 2.A.1) superfamily. Organic cation transporter (TC 2.A.1.19) family. In terms of processing, tyrosine phosphorylated. In terms of tissue distribution, expressed in the kidney, in the proximal tubules of cortex and of the outer medulla. In brain, highly expressed predominantly in regions located at the brain-cerebrospinal fluid border, in the leptomeninges, in the choroid plexus and in a layer boarding the third ventricle. In brain, also observed in the granular cell layer of the cerebellum and in the granular layer and pyramidal cells of the hippocampus in the CA1-CA3 regions. Expressed in tracheal and bronchial ciliated epithelium in the respiratory tract. Expression is greater in the kidney of male than of female.

It localises to the basolateral cell membrane. Its subcellular location is the basal cell membrane. The protein localises to the apical cell membrane. The catalysed reaction is (R)-noradrenaline(out) = (R)-noradrenaline(in). It carries out the reaction (R)-adrenaline(out) = (R)-adrenaline(in). The enzyme catalyses serotonin(out) = serotonin(in). It catalyses the reaction dopamine(out) = dopamine(in). The catalysed reaction is histamine(out) = histamine(in). It carries out the reaction thiamine(in) = thiamine(out). The enzyme catalyses creatinine(in) = creatinine(out). It catalyses the reaction 1-methylnicotinamide(out) = 1-methylnicotinamide(in). The catalysed reaction is guanidine(out) = guanidine(in). It carries out the reaction choline(out) = choline(in). The enzyme catalyses agmatine(out) = agmatine(in). It catalyses the reaction putrescine(out) = putrescine(in). The catalysed reaction is spermidine(in) = spermidine(out). It carries out the reaction tyramine(in) = tyramine(out). The enzyme catalyses L-histidyl-L-proline diketopiperazine(in) = L-histidyl-L-proline diketopiperazine(out). It catalyses the reaction (R)-salsolinol(in) = (R)-salsolinol(out). The catalysed reaction is N-methyl-(R)-salsolinol(in) = N-methyl-(R)-salsolinol(out). It carries out the reaction acetylcholine(in) = acetylcholine(out). The enzyme catalyses prostaglandin F2alpha(out) = prostaglandin F2alpha(in). It catalyses the reaction prostaglandin E2(out) = prostaglandin E2(in). Tyrosine phosphorylation of the transporter leads to activation of the transport activity. Inhibited by cGMP, most likely through a cGMP-binding protein that interacts with OCT2. In terms of biological role, electrogenic voltage-dependent transporter that mediates the transport of a variety of organic cations such as endogenous bioactive amines, cationic drugs and xenobiotics. Functions as a Na(+)-independent, bidirectional uniporter. Cation cellular uptake or release is driven by the electrochemical potential, i.e. membrane potential and concentration gradient. However, may also engage electroneutral cation exchange when saturating concentrations of cation substrates are reached. Predominantly expressed at the basolateral membrane of hepatocytes and proximal tubules and involved in the uptake and disposition of cationic compounds by hepatic and renal clearance from the blood flow. Implicated in monoamine neurotransmitters uptake such as histamine, dopamine, adrenaline/epinephrine, noradrenaline/norepinephrine, serotonin and tyramine, thereby supporting a physiological role in the central nervous system by regulating interstitial concentrations of neurotransmitters. Also capable of transporting dopaminergic neuromodulators cyclo(his-pro), salsolinol and N-methyl-salsolinol, thereby involved in the maintenance of dopaminergic cell integrity in the central nervous system. Mediates the bidirectional transport of acetylcholine (ACh) at the apical membrane of ciliated cell in airway epithelium, thereby playing a role in luminal release of ACh from bronchial epithelium. Also transports guanidine and endogenous monoamines such as vitamin B1/thiamine, creatinine and N-1-methylnicotinamide (NMN). Mediates the uptake and efflux of quaternary ammonium compound choline. Mediates the bidirectional transport of polyamine agmatine and the uptake of polyamine putrescine. Able to transport non-amine endogenous compounds such as prostaglandin E2 (PGE2) and prostaglandin F2-alpha (PGF2-alpha). Also involved in the uptake of xenobiotic 4-(4-(dimethylamino)styryl)-N-methylpyridinium (ASP). May contribute to regulate the transport of organic compounds in testis across the blood-testis-barrier. This chain is Solute carrier family 22 member 2, found in Rattus norvegicus (Rat).